The sequence spans 243 residues: Pyridoxine 5'-phosphate synthase (243 aa).

Asn9 contacts 3-amino-2-oxopropyl phosphate. 11 to 12 lines the 1-deoxy-D-xylulose 5-phosphate pocket; that stretch reads DH. 3-amino-2-oxopropyl phosphate is bound at residue Arg20. Residue His45 is the Proton acceptor of the active site. Positions 47 and 52 each coordinate 1-deoxy-D-xylulose 5-phosphate. The Proton acceptor role is filled by Glu72. Thr102 is a binding site for 1-deoxy-D-xylulose 5-phosphate. His193 serves as the catalytic Proton donor. Residues Gly194 and 215-216 each bind 3-amino-2-oxopropyl phosphate; that span reads GH.

Belongs to the PNP synthase family. In terms of assembly, homooctamer; tetramer of dimers.

Its subcellular location is the cytoplasm. The catalysed reaction is 3-amino-2-oxopropyl phosphate + 1-deoxy-D-xylulose 5-phosphate = pyridoxine 5'-phosphate + phosphate + 2 H2O + H(+). The protein operates within cofactor biosynthesis; pyridoxine 5'-phosphate biosynthesis; pyridoxine 5'-phosphate from D-erythrose 4-phosphate: step 5/5. Functionally, catalyzes the complicated ring closure reaction between the two acyclic compounds 1-deoxy-D-xylulose-5-phosphate (DXP) and 3-amino-2-oxopropyl phosphate (1-amino-acetone-3-phosphate or AAP) to form pyridoxine 5'-phosphate (PNP) and inorganic phosphate. The polypeptide is Pyridoxine 5'-phosphate synthase (Pectobacterium atrosepticum (strain SCRI 1043 / ATCC BAA-672) (Erwinia carotovora subsp. atroseptica)).